Here is a 556-residue protein sequence, read N- to C-terminus: Urocanate hydratase (556 aa).

NAD(+)-binding positions include 53 to 54 (GG), Q131, 177 to 179 (GMG), E197, 243 to 244 (NA), 264 to 268 (QTSAH), 274 to 275 (YL), and Y323. C411 is an active-site residue. G493 is a binding site for NAD(+).

Belongs to the urocanase family. It depends on NAD(+) as a cofactor.

The protein localises to the cytoplasm. The enzyme catalyses 4-imidazolone-5-propanoate = trans-urocanate + H2O. The protein operates within amino-acid degradation; L-histidine degradation into L-glutamate; N-formimidoyl-L-glutamate from L-histidine: step 2/3. Functionally, catalyzes the conversion of urocanate to 4-imidazolone-5-propionate. In Pseudomonas fluorescens (strain SBW25), this protein is Urocanate hydratase.